The following is a 315-amino-acid chain: Methionyl-tRNA formyltransferase (315 aa).

A (6S)-5,6,7,8-tetrahydrofolate-binding site is contributed by 113 to 116 (SLLP).

This sequence belongs to the Fmt family.

The catalysed reaction is L-methionyl-tRNA(fMet) + (6R)-10-formyltetrahydrofolate = N-formyl-L-methionyl-tRNA(fMet) + (6S)-5,6,7,8-tetrahydrofolate + H(+). In terms of biological role, attaches a formyl group to the free amino group of methionyl-tRNA(fMet). The formyl group appears to play a dual role in the initiator identity of N-formylmethionyl-tRNA by promoting its recognition by IF2 and preventing the misappropriation of this tRNA by the elongation apparatus. This Salmonella gallinarum (strain 287/91 / NCTC 13346) protein is Methionyl-tRNA formyltransferase.